We begin with the raw amino-acid sequence, 170 residues long: Protein SprT (170 aa).

The SprT-like domain occupies 19-163; it reads REKLQQANLR…RCLHCGTSLR (145 aa). H78 lines the Zn(2+) pocket. Residue E79 is part of the active site. A Zn(2+)-binding site is contributed by H82.

The protein belongs to the SprT family. It depends on Zn(2+) as a cofactor.

It localises to the cytoplasm. The chain is Protein SprT from Erwinia tasmaniensis (strain DSM 17950 / CFBP 7177 / CIP 109463 / NCPPB 4357 / Et1/99).